The sequence spans 176 residues: NADH-quinone oxidoreductase subunit 10 (176 aa).

5 helical membrane-spanning segments follow: residues 2 to 22, 26 to 46, 56 to 76, 91 to 111, and 137 to 157; these read SLLEGLALFLLLLSGVLVVTL, IHAALALILNFLVLAGVYVAL, VIVYAGAIVVLFLFVIMLLFA, PLAALLALGVAGILAAGLWGL, and FVLLAVGFLLMAATVVAVALV.

It belongs to the complex I subunit 6 family. In terms of assembly, NDH-1 is composed of 15 different subunits, Nqo1 to Nqo15. The complex has a L-shaped structure, with the hydrophobic arm (subunits Nqo7, Nqo8 and Nqo10 to Nqo14) embedded in the membrane and the hydrophilic peripheral arm (subunits Nqo1 to Nqo6, Nqo9 and Nqo15) protruding into the bacterial cytoplasm. The hydrophilic domain contains all the redox centers.

Its subcellular location is the cell inner membrane. The enzyme catalyses a quinone + NADH + 5 H(+)(in) = a quinol + NAD(+) + 4 H(+)(out). In terms of biological role, NDH-1 shuttles electrons from NADH, via FMN and iron-sulfur (Fe-S) centers, to quinones in the respiratory chain. The immediate electron acceptor for the enzyme in this species is menaquinone. Couples the redox reaction to proton translocation (for every two electrons transferred, four hydrogen ions are translocated across the cytoplasmic membrane), and thus conserves the redox energy in a proton gradient required for the synthesis of ATP. This chain is NADH-quinone oxidoreductase subunit 10 (nqo10), found in Thermus thermophilus (strain ATCC 27634 / DSM 579 / HB8).